The sequence spans 217 residues: Ribosomal RNA small subunit methyltransferase G (217 aa).

S-adenosyl-L-methionine is bound by residues Gly79, Leu84, 130-131, and Arg148; that span reads IE.

Belongs to the methyltransferase superfamily. RNA methyltransferase RsmG family.

Its subcellular location is the cytoplasm. The enzyme catalyses guanosine(527) in 16S rRNA + S-adenosyl-L-methionine = N(7)-methylguanosine(527) in 16S rRNA + S-adenosyl-L-homocysteine. Functionally, specifically methylates the N7 position of guanine in position 527 of 16S rRNA. This is Ribosomal RNA small subunit methyltransferase G from Desulfotalea psychrophila (strain LSv54 / DSM 12343).